Consider the following 372-residue polypeptide: Cytochrome b (372 aa).

4 helical membrane passes run 25 to 45 (FGSM…FLAI), 69 to 90 (WIMQ…YIHI), 105 to 125 (WLSG…GYVL), and 170 to 190 (FFAL…IHII). The heme b site is built by His75 and His89. Heme b is bound by residues His174 and His188. An a ubiquinone-binding site is contributed by His193. 4 helical membrane-spanning segments follow: residues 218–238 (YKDM…LSFS), 280–300 (LGGT…PFTH), 312–332 (LSQA…WTAS), and 339–358 (FVTI…ITIP).

It belongs to the cytochrome b family. The cytochrome bc1 complex contains 3 respiratory subunits (MT-CYB, CYC1 and UQCRFS1), 2 core proteins (UQCRC1 and UQCRC2) and probably 6 low-molecular weight proteins. Heme b is required as a cofactor.

The protein localises to the mitochondrion inner membrane. In terms of biological role, component of the ubiquinol-cytochrome c reductase complex (complex III or cytochrome b-c1 complex) that is part of the mitochondrial respiratory chain. The b-c1 complex mediates electron transfer from ubiquinol to cytochrome c. Contributes to the generation of a proton gradient across the mitochondrial membrane that is then used for ATP synthesis. This is Cytochrome b (MT-CYB) from Naja multifasciata (Burrowing cobra).